Consider the following 421-residue polypeptide: Lipid II:glycine glycyltransferase (421 aa).

This sequence belongs to the FemABX family. Monomer.

It is found in the cytoplasm. The catalysed reaction is beta-D-GlcNAc-(1-&gt;4)-Mur2Ac(oyl-L-Ala-D-isoglutaminyl-L-Lys-D-Ala-D-Ala)-di-trans,octa-cis-undecaprenyl diphosphate + glycyl-tRNA(Gly) = beta-D-GlcNAc-(1-&gt;4)-Mur2Ac(oyl-L-Ala-D-isoglutaminyl-L-Lys-(N(6)-Gly)-D-Ala-D-Ala)-di-trans,octa-cis-undecaprenyl diphosphate + tRNA(Gly) + H(+). In terms of biological role, catalyzes the incorporation of the first glycine of the pentaglycine interpeptide bridge, which is characteristic of the S.aureus peptidoglycan. This glycine is added to the epsilon-amino group of the L-lysine of the membrane-bound lipid II intermediate (GlcNAc-(beta-1,4)-N-acetylmuramic acid(-L-Ala-D-iGln-L-Lys-D-Ala-D-Ala)-pyrophosphoryl-undecaprenol), using glycyl-tRNA(Gly) as donor, in a ribosome-independent mechanism. This is Lipid II:glycine glycyltransferase (femX) from Staphylococcus aureus (strain MSSA476).